Reading from the N-terminus, the 119-residue chain is Immunoglobulin lambda variable 2-11 (119 aa).

Residues 1–19 (MAWALLLLSLLTQGTGSWA) form the signal peptide. Pyrrolidone carboxylic acid is present on Q20. The framework-1 stretch occupies residues 20–44 (QSALTQPRSVSGSPGQSVTISCTGT). Positions 20-119 (QSALTQPRSV…CSYAGSYTFH (100 aa)) constitute an Ig-like domain. A disulfide bridge links C41 with C109. Residues 45–53 (SSDVGGYNY) form a complementarity-determining-1 region. Residues 54–70 (VSWYQQHPGKAPKLMIY) are framework-2. Residues 71 to 73 (DVS) are complementarity-determining-2. The tract at residues 74-109 (KRPSGVPDRFSGSKSGNTASLTISGLQAEDEADYYC) is framework-3. A complementarity-determining-3 region spans residues 110–119 (CSYAGSYTFH).

In terms of assembly, immunoglobulins are composed of two identical heavy chains and two identical light chains; disulfide-linked.

Its subcellular location is the secreted. It localises to the cell membrane. In terms of biological role, v region of the variable domain of immunoglobulin light chains that participates in the antigen recognition. Immunoglobulins, also known as antibodies, are membrane-bound or secreted glycoproteins produced by B lymphocytes. In the recognition phase of humoral immunity, the membrane-bound immunoglobulins serve as receptors which, upon binding of a specific antigen, trigger the clonal expansion and differentiation of B lymphocytes into immunoglobulins-secreting plasma cells. Secreted immunoglobulins mediate the effector phase of humoral immunity, which results in the elimination of bound antigens. The antigen binding site is formed by the variable domain of one heavy chain, together with that of its associated light chain. Thus, each immunoglobulin has two antigen binding sites with remarkable affinity for a particular antigen. The variable domains are assembled by a process called V-(D)-J rearrangement and can then be subjected to somatic hypermutations which, after exposure to antigen and selection, allow affinity maturation for a particular antigen. The chain is Immunoglobulin lambda variable 2-11 from Homo sapiens (Human).